Here is a 432-residue protein sequence, read N- to C-terminus: MSKPSYKVADISLAEWGRKAIIIAENEMPGLMACRKKYGPSKPLKGARITGCLHMTVQTAVLIETLVELGAQVQWSSCNIFSTQDNAAAAIAATGVPVYAWKGETDEEYMWCIEQTLVFPDGQPLNMILDDGGDLTNLVHEKFPQYLKNIKGLSEETTTGVHNLYKMFKEGRLGVPAINVNDSVTKSKFDNLYGCRESLIDGIKRATDVMIAGKVCCVAGYGDVGKGCAQALKGFGGRVIVTEVDPINALQAAMEGYEVTTMEEASKEASIFVTTTGCRDIITSVHLQQMPDDAIVCNIGHFDIEIDVDWLNANAKEKVNVKPQVDRYTMQSGKHIILLAEGRLVNLGCAHGHPSFVMSNSFTNQVLAQIELWTKSDKYAVGVHVLPKILDEEVASLHLEKLGVKLTKLTEKQATYLGVSQTGPFKPDHYRY.

Residues threonine 56, aspartate 131, and glutamate 156 each coordinate substrate. 157–159 serves as a coordination point for NAD(+); that stretch reads TTT. Lysine 186 and aspartate 190 together coordinate substrate. NAD(+)-binding positions include 222-227, glutamate 243, asparagine 248, 299-301, asparagine 346, histidine 353, lysine 426, 426-430, and tyrosine 430; these read GDVGKG, IGH, and KPDHY.

It belongs to the adenosylhomocysteinase family. Interacts with AhcyL1; the interaction may negatively regulate Ahcy catalytic activity. The cofactor is NAD(+).

It catalyses the reaction S-adenosyl-L-homocysteine + H2O = L-homocysteine + adenosine. Its pathway is amino-acid biosynthesis; L-homocysteine biosynthesis; L-homocysteine from S-adenosyl-L-homocysteine: step 1/1. In terms of biological role, adenosylhomocysteine is a competitive inhibitor of S-adenosyl-L-methionine-dependent methyl transferase reactions; therefore adenosylhomocysteinase may play a key role in the control of methylations via regulation of the intracellular concentration of adenosylhomocysteine. The chain is Adenosylhomocysteinase from Drosophila melanogaster (Fruit fly).